The chain runs to 631 residues: Squalene--hopene cyclase (631 aa).

PFTB repeat units lie at residues 15–56 (LDRA…LDRV), 61–102 (MEKI…KYIG), and 241–282 (EIRA…QHPA). The active-site Proton donor is the Asp-376. 4 PFTB repeats span residues 400 to 441 (MTKG…GEVT), 468 to 508 (IRRA…KAVG), 516 to 557 (IQKA…SQTA), and 574 to 622 (ARRG…LALG).

The protein belongs to the terpene cyclase/mutase family. In terms of assembly, homodimer.

Its subcellular location is the cell membrane. The enzyme catalyses squalene = hop-22(29)-ene. The catalysed reaction is squalene + H2O = hopan-22-ol. Its pathway is secondary metabolite biosynthesis; hopanoid biosynthesis. Catalyzes the cyclization of squalene to two pentacyclic triterpenes, hop-22(29)-ene and hopan-22-ol (diplopterol); hopene and hopanol are formed at a constant ratio of 5:1. Is a key enzyme of hopanoid biosynthesis; hopanoids are components of the bacterial cytoplasmic membranes that play a vital role in stabilizing the membranes. The chain is Squalene--hopene cyclase (shc) from Alicyclobacillus acidocaldarius subsp. acidocaldarius (strain ATCC 27009 / DSM 446 / BCRC 14685 / JCM 5260 / KCTC 1825 / NBRC 15652 / NCIMB 11725 / NRRL B-14509 / 104-IA) (Bacillus acidocaldarius).